We begin with the raw amino-acid sequence, 1085 residues long: Error-prone DNA polymerase 2 (1085 aa).

The segment at A1040–D1066 is disordered.

Belongs to the DNA polymerase type-C family. DnaE2 subfamily.

The protein localises to the cytoplasm. The enzyme catalyses DNA(n) + a 2'-deoxyribonucleoside 5'-triphosphate = DNA(n+1) + diphosphate. Functionally, DNA polymerase involved in damage-induced mutagenesis and translesion synthesis (TLS). It is not the major replicative DNA polymerase. The polypeptide is Error-prone DNA polymerase 2 (Agrobacterium fabrum (strain C58 / ATCC 33970) (Agrobacterium tumefaciens (strain C58))).